We begin with the raw amino-acid sequence, 352 residues long: C-C chemokine receptor type 5 (352 aa).

At 1–30 (MDYQVSSPTYDIDYYTSEPCQKVNVKQIAA) the chain is on the extracellular side. At Tyr3 the chain carries Sulfotyrosine. Residues Ser6 and Ser7 are each glycosylated (O-linked (GalNAc...) serine). Sulfotyrosine is present on residues Tyr10, Tyr14, and Tyr15. 2 disulfide bridges follow: Cys20–Cys269 and Cys101–Cys178. A helical transmembrane segment spans residues 31–58 (RLLPPLYSLVFIFGFVGNILVVLILINC). At 59 to 68 (KRLKSMTDIY) the chain is on the cytoplasmic side. A helical transmembrane segment spans residues 69–89 (LLNLAISDLFFLLTVPFWAHY). Residues 90–102 (AAARWDFGNTMCQ) lie on the Extracellular side of the membrane. Residues 103–124 (LLTGLYFIGFFSGIFFIILLTI) form a helical membrane-spanning segment. The Cytoplasmic portion of the chain corresponds to 125–141 (DRYLAIVHAVFALKART). A helical membrane pass occupies residues 142–166 (VTFGVVTSVITWVVAVFASLPGIIF). Residues 167–198 (TRSQREGLHYTCSSHFPYSQYQFWKNFQTLKI) lie on the Extracellular side of the membrane. The chain crosses the membrane as a helical span at residues 199-218 (VILGLVLPLLVMVICYSGIL). Residues 219–235 (KTLLRCRNEKKRHRAVR) are Cytoplasmic-facing. The helical transmembrane segment at 236 to 260 (LIFTIMIVYFLFWAPYNIVLLLNTF) threads the bilayer. Topologically, residues 261–277 (QEFFGLNNCSSSNRLDQ) are extracellular. Residues 278 to 301 (AMQVTETLGMTHCCINPIIYAFVG) traverse the membrane as a helical segment. Residues 302–352 (EKFRNYLLVFFQKHIAKRFCKCCSIFQQEAPERASSVYTRSTGEQEISVGL) are Cytoplasmic-facing. S-palmitoyl cysteine attachment occurs at residues Cys321, Cys323, and Cys324. A phosphoserine; by BARK1 mark is found at Ser336, Ser337, Ser342, and Ser349.

It belongs to the G-protein coupled receptor 1 family. Interacts with PRAF2. Efficient ligand binding to CCL3/MIP-1alpha and CCL4/MIP-1beta requires sulfation, O-glycosylation and sialic acid modifications. Glycosylation on Ser-6 is required for efficient binding of CCL4. Interacts with GRK2. Interacts with ARRB1 and ARRB2. Interacts with CNIH4. Interacts with S100A4; this interaction stimulates T-lymphocyte chemotaxis. In terms of processing, sulfated on at least 2 of the N-terminal tyrosines. Sulfation is required for efficient binding of the chemokines, CCL3 and CCL4. Post-translationally, palmitoylation in the C-terminal is important for cell surface expression. Phosphorylation on serine residues in the C-terminal is stimulated by binding CC chemokines especially by APO-RANTES. In terms of processing, O-glycosylated, but not N-glycosylated. Ser-6 appears to be the major site even if Ser-7 may be also O-glycosylated. Also sialylated glycans present which contribute to chemokine binding. Thr-16 and Ser-17 may also be glycosylated and, if so, with small moieties such as a T-antigen.

Its subcellular location is the cell membrane. In terms of biological role, receptor for a number of inflammatory CC-chemokines including CCL3/MIP-1-alpha, CCL4/MIP-1-beta and RANTES and subsequently transduces a signal by increasing the intracellular calcium ion level. May play a role in the control of granulocytic lineage proliferation or differentiation. Participates in T-lymphocyte migration to the infection site by acting as a chemotactic receptor. The polypeptide is C-C chemokine receptor type 5 (CCR5) (Nasalis larvatus (Proboscis monkey)).